Here is a 400-residue protein sequence, read N- to C-terminus: Large envelope protein (400 aa).

At M1 the chain carries N-acetylmethionine. Disordered stretches follow at residues 1-64 (MGGW…GAFG), 85-118 (LTTVPAAPPPASTNRQSGRQPTPISPPLRDSHPQ), and 143-174 (PGGSSSGTVNPVPTTASPISSISSRTGDPAPN). G2 carries N-myristoyl glycine; by host lipidation. A pre-S1 region spans residues 2–119 (GGWSSKPRQG…PPLRDSHPQA (118 aa)). Positions 2–174 (GGWSSKPRQG…SSRTGDPAPN (173 aa)) are pre-S. Topologically, residues 2-181 (GGWSSKPRQG…APNMESTTSG (180 aa)) are virion surface; in external conformation. Residues 2–253 (GGWSSKPRQG…PGYRWMCLRR (252 aa)) lie on the Intravirion; in internal conformation side of the membrane. N-linked (GlcNAc...) asparagine glycosylation is present at W4. Residues 96 to 106 (STNRQSGRQPT) show a composition bias toward polar residues. Residues 120-174 (MQWNSTTFHQVLLDPRVRGLYFPPGGSSSGTVNPVPTTASPISSISSRTGDPAPN) are pre-S2. Positions 155–166 (PTTASPISSISS) are enriched in low complexity. The chain crosses the membrane as a helical span at residues 182 to 202 (FLGPLLVLQAGFFLLTRILTI). Residues 203–253 (PQSLDSWWTSLNFLGGAPTCPGQNSQSPTSNHSPTSCPPICPGYRWMCLRR) are Intravirion; in external conformation-facing. Residues 254-274 (FIIFLFILLLCLIFLLVLLDY) traverse the membrane as a helical segment. Topologically, residues 275–348 (QGMLPVCPLL…GASVRFSWLS (74 aa)) are virion surface. N-linked (GlcNAc...) asparagine; by host glycosylation is present at N320. The chain crosses the membrane as a helical span at residues 349 to 369 (LLVPFVQWFVGLSPTVWLSVI). The Intravirion segment spans residues 370 to 375 (WMMWYW). A helical membrane pass occupies residues 376 to 398 (GPSLYNILSPFLPLLPIFFCLWV). Residues 399 to 400 (YI) are Virion surface-facing.

Belongs to the orthohepadnavirus major surface antigen family. As to quaternary structure, in its internal form (Li-HBsAg), interacts with the capsid protein and with the isoform S. Interacts with host chaperone CANX. In terms of assembly, associates with host chaperone CANX through its pre-S2 N glycan; this association may be essential for isoform M proper secretion. Interacts with isoform L. Interacts with the antigens of satellite virus HDV (HDVAgs); this interaction is required for encapsidation of HDV genomic RNA. Isoform M is N-terminally acetylated by host at a ratio of 90%, and N-glycosylated by host at the pre-S2 region. Post-translationally, myristoylated.

It localises to the virion membrane. Its function is as follows. The large envelope protein exists in two topological conformations, one which is termed 'external' or Le-HBsAg and the other 'internal' or Li-HBsAg. In its external conformation the protein attaches the virus to cell receptors and thereby initiating infection. This interaction determines the species specificity and liver tropism. This attachment induces virion internalization predominantly through caveolin-mediated endocytosis. The large envelope protein also assures fusion between virion membrane and endosomal membrane. In its internal conformation the protein plays a role in virion morphogenesis and mediates the contact with the nucleocapsid like a matrix protein. In terms of biological role, the middle envelope protein plays an important role in the budding of the virion. It is involved in the induction of budding in a nucleocapsid independent way. In this process the majority of envelope proteins bud to form subviral lipoprotein particles of 22 nm of diameter that do not contain a nucleocapsid. This Homo sapiens (Human) protein is Large envelope protein.